The chain runs to 368 residues: H-2 class I histocompatibility antigen, K-W28 alpha chain (368 aa).

Positions 1 to 21 (MAPCMLLLLLAAALAPTQTRA) are cleaved as a signal peptide. The tract at residues 22 to 111 (GPHSLRYFHT…LLRYYNQSAG (90 aa)) is alpha-1. Over 22–305 (GPHSLRYFHT…EPPPSAVSNT (284 aa)) the chain is Extracellular. The N-linked (GlcNAc...) asparagine glycan is linked to N107. Positions 112–203 (GSHTIQRMYG…KNGNATLLRT (92 aa)) are alpha-2. C122 and C185 are disulfide-bonded. N197 carries an N-linked (GlcNAc...) asparagine glycan. Residues 204–295 (DSPKAHVTHH…GLPKPLTLRW (92 aa)) form an alpha-3 region. Residues 206–292 (PKAHVTHHSR…YHQGLPKPLT (87 aa)) form the Ig-like C1-type domain. A disulfide bridge connects residues C224 and C280. The interval 296 to 305 (EPPPSAVSNT) is connecting peptide. The chain crosses the membrane as a helical span at residues 306–329 (VIIAVLVVLGAAIVTGAVVAFVMM). The Cytoplasmic portion of the chain corresponds to 330–368 (RRRNTGGKGGDYALAPGSQTSDLSLPDCKVMVHDPHSLA). Residues S350 and S353 each carry the phosphoserine modification.

Belongs to the MHC class I family. As to quaternary structure, heterodimer of an alpha chain and a beta chain (beta-2-microglobulin).

It localises to the membrane. Functionally, involved in the presentation of foreign antigens to the immune system. The chain is H-2 class I histocompatibility antigen, K-W28 alpha chain (H2-K1) from Mus musculus (Mouse).